Consider the following 346-residue polypeptide: NADH-quinone oxidoreductase subunit H (346 aa).

8 consecutive transmembrane segments (helical) span residues 6 to 26 (ILFWLLKSGLFFFILITACAY), 76 to 96 (VMYLIAPAISMTCAIMAWSVV), 128 to 148 (ILFLFAISSLAVYGIIIAGWA), 166 to 186 (ISYELPLGMSVVSIVILSGSL), 198 to 218 (LWNIFKLPGFIAFCLFVVAMF), 260 to 280 (ITMSCVVTLLFFGGYQVPFGI), 289 to 309 (LFGLVFFLGKVLFFTFLFLWV), and 324 to 344 (LGWKKLIPWAILNILIASIYI).

Belongs to the complex I subunit 1 family. In terms of assembly, NDH-1 is composed of 14 different subunits. Subunits NuoA, H, J, K, L, M, N constitute the membrane sector of the complex.

It is found in the cell inner membrane. It catalyses the reaction a quinone + NADH + 5 H(+)(in) = a quinol + NAD(+) + 4 H(+)(out). Functionally, NDH-1 shuttles electrons from NADH, via FMN and iron-sulfur (Fe-S) centers, to quinones in the respiratory chain. The immediate electron acceptor for the enzyme in this species is believed to be ubiquinone. Couples the redox reaction to proton translocation (for every two electrons transferred, four hydrogen ions are translocated across the cytoplasmic membrane), and thus conserves the redox energy in a proton gradient. This subunit may bind ubiquinone. This Leptospira interrogans serogroup Icterohaemorrhagiae serovar copenhageni (strain Fiocruz L1-130) protein is NADH-quinone oxidoreductase subunit H.